Here is a 442-residue protein sequence, read N- to C-terminus: Citrate transporter CitP (442 aa).

13 helical membrane-spanning segments follow: residues 27–47 (ISGIGLIAYAFMAVLLIIAIS), 59–79 (IFALVLMGHVFYYLGAHLPIF), 83–103 (LGGGSVFTILLTAILVATNVI), 114–134 (FINGMDFLGLYIVSLIASSLF), 151–171 (VAFISMALTAVVIGIVGVIIG), 177–197 (AILYIAMPIMAGGVGAGIVPL), 209–229 (SAGILSKLFPTVILGNLLAII), 267–287 (YVQLGVGLIIAVMFFMIGTML), 293–313 (GINAYAFIILSIVLTKAFGLL), 321–341 (VIMFGQVIVKNMTHALLAGVG), 349–369 (VLLAALSWQFVVLCLVSIVAI), 387–409 (AAITAGLANNSMGGTGNVAVLAA), and 421–441 (MGNRIGGALILVVAGILVTFM).

Belongs to the 2-hydroxycarboxylate transporter (2-HCT) (TC 2.A.24) family.

The protein resides in the cell membrane. The enzyme catalyses (R)-lactate(in) + citrate(out) = (R)-lactate(out) + citrate(in). It catalyses the reaction (S)-lactate(in) + citrate(out) = (S)-lactate(out) + citrate(in). It carries out the reaction citrate(in) + H(+)(in) = citrate(out) + H(+)(out). The transport of citrate is unaffected by the presence of citrate in the growth media. Its function is as follows. Secondary transporter involved in citrate metabolism. During cometabolism of citrate and glucose, catalyzes the uptake of divalent citrate into the cell coupled to the exit of monovalent lactate, the end product of glycolysis in L.lactis. The citrate/lactate exchange is electrogenic and results in the generation of a membrane potential. Plays an important role in resistance against lactate toxicity at low pH. In the absence of glucose, i.e. when no lactate is produced, CitP catalyzes the uptake of citrate in exchange with the citrate metabolism intermediates pyruvate and alpha-acetolactate, and the end product acetate. In the absence of glucose, CitP can also catalyze the proton-dependent transport of citrate. In vitro, shows a broad substrate specificity. Can transport a wide variety of mono- and dicarboxylates of the form X-CR(2)-COO(-), where X represents OH (2-hydroxy acid), O (2-keto acid), or H (acid) and R groups differ in size, hydrophobicity and composition. Many of the substrates are intermediates or products of amino acid metabolism, suggesting that CitP may have a broader physiological function than its role in citrate metabolism. The sequence is that of Citrate transporter CitP from Lactococcus lactis subsp. lactis (Streptococcus lactis).